The sequence spans 637 residues: DNA mismatch repair protein MutL (637 aa).

Residues 343–352 are compositionally biased toward polar residues; sequence QQSPDRQVSP. Residues 343 to 411 form a disordered region; sequence QQSPDRQVSP…SARNGDVSLP (69 aa). Residues 365 to 380 are compositionally biased toward basic and acidic residues; the sequence is SIERKPSVSYDVRDSH. Residues 388–397 show a composition bias toward low complexity; it reads YSSGSSSYRS.

It belongs to the DNA mismatch repair MutL/HexB family.

Functionally, this protein is involved in the repair of mismatches in DNA. It is required for dam-dependent methyl-directed DNA mismatch repair. May act as a 'molecular matchmaker', a protein that promotes the formation of a stable complex between two or more DNA-binding proteins in an ATP-dependent manner without itself being part of a final effector complex. This is DNA mismatch repair protein MutL from Shewanella halifaxensis (strain HAW-EB4).